The chain runs to 266 residues: UPF0294 protein Ent638_0743 (266 aa).

This sequence belongs to the UPF0294 family.

The protein resides in the cytoplasm. This Enterobacter sp. (strain 638) protein is UPF0294 protein Ent638_0743.